The primary structure comprises 571 residues: Sulfite reductase [NADPH] hemoprotein beta-component (571 aa).

[4Fe-4S] cluster-binding residues include cysteine 436, cysteine 442, cysteine 481, and cysteine 485. Cysteine 485 is a binding site for siroheme.

Belongs to the nitrite and sulfite reductase 4Fe-4S domain family. In terms of assembly, alpha(8)-beta(8). The alpha component is a flavoprotein, the beta component is a hemoprotein. Siroheme serves as cofactor. The cofactor is [4Fe-4S] cluster.

It catalyses the reaction hydrogen sulfide + 3 NADP(+) + 3 H2O = sulfite + 3 NADPH + 4 H(+). It functions in the pathway sulfur metabolism; hydrogen sulfide biosynthesis; hydrogen sulfide from sulfite (NADPH route): step 1/1. Its function is as follows. Component of the sulfite reductase complex that catalyzes the 6-electron reduction of sulfite to sulfide. This is one of several activities required for the biosynthesis of L-cysteine from sulfate. This Bacillus velezensis (strain DSM 23117 / BGSC 10A6 / LMG 26770 / FZB42) (Bacillus amyloliquefaciens subsp. plantarum) protein is Sulfite reductase [NADPH] hemoprotein beta-component.